Consider the following 207-residue polypeptide: N-(5'-phosphoribosyl)anthranilate isomerase (207 aa).

The protein belongs to the TrpF family.

It catalyses the reaction N-(5-phospho-beta-D-ribosyl)anthranilate = 1-(2-carboxyphenylamino)-1-deoxy-D-ribulose 5-phosphate. Its pathway is amino-acid biosynthesis; L-tryptophan biosynthesis; L-tryptophan from chorismate: step 3/5. This is N-(5'-phosphoribosyl)anthranilate isomerase from Legionella pneumophila (strain Paris).